The primary structure comprises 426 residues: Target of rapamycin complex 2 subunit AVO2 (426 aa).

ANK repeat units lie at residues 4 to 33 (EPSV…DLLT), 39 to 68 (NGWS…DKHE), 74 to 104 (KGNT…FINH), 108 to 137 (NGRA…DLWV), and 141 to 171 (NGDT…SLDD). Positions 259–302 (STHTTSGNGGNRRSSITNPVFNPRKPTLSTDSFSSSSNSSSRLR) are disordered. Positions 260–278 (THTTSGNGGNRRSSITNPV) are enriched in polar residues. The segment covering 285-302 (TLSTDSFSSSSNSSSRLR) has biased composition (low complexity). Phosphoserine occurs at positions 315 and 350. A compositionally biased stretch (polar residues) spans 350–359 (SNDNVRGDSQ). A disordered region spans residues 350–392 (SNDNVRGDSQTATINDDGGGGNGGDATIGMGLRKDPDDENENK). Residues 366–375 (DGGGGNGGDA) show a composition bias toward gly residues. The segment covering 381–392 (LRKDPDDENENK) has biased composition (basic and acidic residues).

In terms of assembly, the target of rapamycin complex 2 (TORC2) is composed of at least AVO1, AVO2, BIT61, LST8, TOR2 and TSC11. TORC2 forms a homodimer. Contrary to TORC1, TORC2 does not bind to and is not sensitive to FKBP-rapamycin. AVO2 is peripherally associated to AVO1 and TSC11.

The protein localises to the cell membrane. It is found in the vacuole membrane. In terms of biological role, component of TORC2, which regulates cell cycle-dependent polarization of the actin-cytoskeleton and cell wall integrity. TORC2 controls polarity of the actin cytoskeleton, which is required for orienting the secretory pathway toward discrete growth sites, via the RHO1/PKC1/MAPK cell integrity pathway. The sequence is that of Target of rapamycin complex 2 subunit AVO2 (AVO2) from Saccharomyces cerevisiae (strain ATCC 204508 / S288c) (Baker's yeast).